The primary structure comprises 316 residues: Methionyl-tRNA formyltransferase (316 aa).

112-115 (SLLP) is a (6S)-5,6,7,8-tetrahydrofolate binding site.

This sequence belongs to the Fmt family.

It carries out the reaction L-methionyl-tRNA(fMet) + (6R)-10-formyltetrahydrofolate = N-formyl-L-methionyl-tRNA(fMet) + (6S)-5,6,7,8-tetrahydrofolate + H(+). Attaches a formyl group to the free amino group of methionyl-tRNA(fMet). The formyl group appears to play a dual role in the initiator identity of N-formylmethionyl-tRNA by promoting its recognition by IF2 and preventing the misappropriation of this tRNA by the elongation apparatus. This is Methionyl-tRNA formyltransferase from Flavobacterium psychrophilum (strain ATCC 49511 / DSM 21280 / CIP 103535 / JIP02/86).